The sequence spans 350 residues: UDP-N-acetylenolpyruvoylglucosamine reductase (350 aa).

In terms of domain architecture, FAD-binding PCMH-type spans 24-195 (HVEATARWLL…VAVEFNLPLL (172 aa)). The active site involves Arg-172. Catalysis depends on Ser-245, which acts as the Proton donor. The active site involves Glu-342.

The protein belongs to the MurB family. It depends on FAD as a cofactor.

The protein resides in the cytoplasm. The catalysed reaction is UDP-N-acetyl-alpha-D-muramate + NADP(+) = UDP-N-acetyl-3-O-(1-carboxyvinyl)-alpha-D-glucosamine + NADPH + H(+). It participates in cell wall biogenesis; peptidoglycan biosynthesis. Its function is as follows. Cell wall formation. This chain is UDP-N-acetylenolpyruvoylglucosamine reductase, found in Xanthomonas axonopodis pv. citri (strain 306).